The primary structure comprises 82 residues: Small ribosomal subunit protein bS16 (82 aa).

Belongs to the bacterial ribosomal protein bS16 family.

The sequence is that of Small ribosomal subunit protein bS16 from Desulfosudis oleivorans (strain DSM 6200 / JCM 39069 / Hxd3) (Desulfococcus oleovorans).